Reading from the N-terminus, the 445-residue chain is GTPase Der (445 aa).

EngA-type G domains lie at 3-167 (PVIA…YAGQ) and 180-353 (IKIA…AAAM). GTP contacts are provided by residues 9–16 (GRPNVGKS), 56–60 (DTGGF), 119–122 (NKAE), 186–193 (GRPNVGKS), 233–237 (DTAGL), and 298–301 (NKWD). The KH-like domain maps to 354–438 (AKLPTPKLTR…PLRIEFRSSN (85 aa)).

This sequence belongs to the TRAFAC class TrmE-Era-EngA-EngB-Septin-like GTPase superfamily. EngA (Der) GTPase family. As to quaternary structure, associates with the 50S ribosomal subunit.

Functionally, GTPase that plays an essential role in the late steps of ribosome biogenesis. The protein is GTPase Der of Burkholderia ambifaria (strain ATCC BAA-244 / DSM 16087 / CCUG 44356 / LMG 19182 / AMMD) (Burkholderia cepacia (strain AMMD)).